We begin with the raw amino-acid sequence, 173 residues long: Alpha-crystallin A chain (173 aa).

Residue Met-1 is modified to N-acetylmethionine. The tract at residues 1–63 is required for complex formation with BFSP1 and BFSP2; it reads MDVTIQHPWF…RTVLDSGISE (63 aa). Gln-6 carries the deamidated glutamine; partial modification. Ser-45 carries the phosphoserine modification. Gln-50 is subject to Deamidated glutamine; partial. The sHSP domain maps to 52–162; the sequence is LFRTVLDSGI…GHSERAIPVS (111 aa). 2 positions are modified to N6-acetyllysine: Lys-70 and Lys-99. His-100 contacts Zn(2+). Asn-101 carries the deamidated asparagine; partial modification. Zn(2+) contacts are provided by Glu-102 and His-107. Residue Ser-122 is modified to Phosphoserine. Asn-123 is subject to Deamidated asparagine; partial. The interval 145–173 is disordered; sequence KVQSGLDAGHSERAIPVSREEKPSSAPSS. The residue at position 147 (Gln-147) is a Deamidated glutamine; partial. Basic and acidic residues predominate over residues 153 to 167; it reads GHSERAIPVSREEKP. His-154 is a Zn(2+) binding site. The O-linked (GlcNAc) serine glycan is linked to Ser-162.

The protein belongs to the small heat shock protein (HSP20) family. As to quaternary structure, heteromer composed of three CRYAA and one CRYAB subunits. Inter-subunit bridging via zinc ions enhances stability, which is crucial as there is no protein turn over in the lens. Can also form homodimers and homotetramers (dimers of dimers) which serve as the building blocks of homooligomers. Within homooligomers, the zinc-binding motif is created from residues of 3 different molecules. His-100 and Glu-102 from one molecule are ligands of the zinc ion, and His-107 and His-154 residues from additional molecules complete the site with tetrahedral coordination geometry. Part of a complex required for lens intermediate filament formation composed of BFSP1, BFSP2 and CRYAA. Acetylation at Lys-70 may increase chaperone activity. In terms of processing, undergoes age-dependent proteolytical cleavage at the C-terminus.

Its subcellular location is the cytoplasm. The protein resides in the nucleus. In terms of biological role, contributes to the transparency and refractive index of the lens. Acts as a chaperone, preventing aggregation of various proteins under a wide range of stress conditions. Required for the correct formation of lens intermediate filaments as part of a complex composed of BFSP1, BFSP2 and CRYAA. The chain is Alpha-crystallin A chain (CRYAA) from Meriones unguiculatus (Mongolian jird).